We begin with the raw amino-acid sequence, 116 residues long: Phosphoribosyl-AMP cyclohydrolase (116 aa).

A Mg(2+)-binding site is contributed by Asp-80. Residue Cys-81 participates in Zn(2+) binding. Residues Asp-82 and Asp-84 each contribute to the Mg(2+) site. Zn(2+)-binding residues include Cys-98 and Cys-105.

It belongs to the PRA-CH family. Homodimer. Requires Mg(2+) as cofactor. Zn(2+) is required as a cofactor.

The protein resides in the cytoplasm. The catalysed reaction is 1-(5-phospho-beta-D-ribosyl)-5'-AMP + H2O = 1-(5-phospho-beta-D-ribosyl)-5-[(5-phospho-beta-D-ribosylamino)methylideneamino]imidazole-4-carboxamide. It participates in amino-acid biosynthesis; L-histidine biosynthesis; L-histidine from 5-phospho-alpha-D-ribose 1-diphosphate: step 3/9. Catalyzes the hydrolysis of the adenine ring of phosphoribosyl-AMP. In Trichormus variabilis (strain ATCC 29413 / PCC 7937) (Anabaena variabilis), this protein is Phosphoribosyl-AMP cyclohydrolase.